The primary structure comprises 63 residues: Hypoxia-inducible lipid droplet-associated protein (63 aa).

Residues 1–37 form a required for targeting to lipid droplets region; sequence MKHVLNLYLLGVVLTLLSIFVRVMESLEGLLESPSPG. Residues 7–23 traverse the membrane as a helical segment; that stretch reads LYLLGVVLTLLSIFVRV. Residues 31 to 63 form a disordered region; it reads LESPSPGTSWTTRSQLANTEPTKGLPDHPSRSM. Residues 35–51 show a composition bias toward polar residues; the sequence is SPGTSWTTRSQLANTEP. Ser44 carries the phosphoserine modification.

In terms of tissue distribution, highly expressed in renal cell carcinoma cells but barely detectable in adjacent normal kidney tissue. Detected in some cervical and endometrial cancers. Expression also detected in fetal kidney with little or no expression observed in normal adult heart, liver, lung, pancreas, prostate or spinal cord (at protein level).

The protein resides in the lipid droplet. It is found in the secreted. It localises to the membrane. Its function is as follows. Increases intracellular lipid accumulation. Stimulates expression of cytokines including IL6, MIF and VEGFA. Enhances cell growth and proliferation. This chain is Hypoxia-inducible lipid droplet-associated protein (HILPDA), found in Homo sapiens (Human).